Consider the following 362-residue polypeptide: Outer membrane porin protein OmpD (362 aa).

Positions 1 to 21 are cleaved as a signal peptide; it reads MKLKLVAVAVTSLLAAGVVNA.

Belongs to the Gram-negative porin family. Homotrimer.

Its subcellular location is the cell outer membrane. In terms of biological role, forms pores that allow passive diffusion of small molecules across the outer membrane. The chain is Outer membrane porin protein OmpD (ompD) from Salmonella choleraesuis (strain SC-B67).